Here is a 388-residue protein sequence, read N- to C-terminus: Chorismate synthase (388 aa).

Residues arginine 39 and arginine 45 each contribute to the NADP(+) site. FMN is bound by residues 130–132, 251–252, glycine 296, 311–315, and arginine 337; these read RSS, NA, and KPIPT.

The protein belongs to the chorismate synthase family. As to quaternary structure, homotetramer. Requires FMNH2 as cofactor.

The catalysed reaction is 5-O-(1-carboxyvinyl)-3-phosphoshikimate = chorismate + phosphate. It participates in metabolic intermediate biosynthesis; chorismate biosynthesis; chorismate from D-erythrose 4-phosphate and phosphoenolpyruvate: step 7/7. Its function is as follows. Catalyzes the anti-1,4-elimination of the C-3 phosphate and the C-6 proR hydrogen from 5-enolpyruvylshikimate-3-phosphate (EPSP) to yield chorismate, which is the branch point compound that serves as the starting substrate for the three terminal pathways of aromatic amino acid biosynthesis. This reaction introduces a second double bond into the aromatic ring system. This is Chorismate synthase from Streptococcus pneumoniae serotype 19F (strain G54).